The chain runs to 122 residues: Acidic phospholipase A2 (122 aa).

7 disulfides stabilise this stretch: Cys26/Cys115, Cys28/Cys44, Cys43/Cys95, Cys49/Cys122, Cys50/Cys88, Cys57/Cys81, and Cys75/Cys86. The Ca(2+) site is built by Tyr27, Gly29, and Gly31. Residue His47 is part of the active site. Asp48 contributes to the Ca(2+) binding site. The active site involves Asp89.

It depends on Ca(2+) as a cofactor. In terms of tissue distribution, expressed by the venom gland.

Its subcellular location is the secreted. The enzyme catalyses a 1,2-diacyl-sn-glycero-3-phosphocholine + H2O = a 1-acyl-sn-glycero-3-phosphocholine + a fatty acid + H(+). In terms of biological role, PLA2 catalyzes the calcium-dependent hydrolysis of the 2-acyl groups in 3-sn-phosphoglycerides. This chain is Acidic phospholipase A2, found in Lachesis stenophrys (Central American bushmaster).